An 85-amino-acid polypeptide reads, in one-letter code: Large ribosomal subunit protein bL27 (85 aa).

The interval 1-20 (MATKKAGGSTRNGRDSEAKR) is disordered.

Belongs to the bacterial ribosomal protein bL27 family.

This is Large ribosomal subunit protein bL27 from Actinobacillus succinogenes (strain ATCC 55618 / DSM 22257 / CCUG 43843 / 130Z).